A 306-amino-acid chain; its full sequence is UDP-N-acetylenolpyruvoylglucosamine reductase (306 aa).

The region spanning 28–194 is the FAD-binding PCMH-type domain; the sequence is KIGNISKLFL…LKTELNLKKE (167 aa). The Proton donor role is filled by serine 223. Residue glutamate 295 is part of the active site.

The protein belongs to the MurB family. Requires FAD as cofactor.

The protein localises to the cytoplasm. The enzyme catalyses UDP-N-acetyl-alpha-D-muramate + NADP(+) = UDP-N-acetyl-3-O-(1-carboxyvinyl)-alpha-D-glucosamine + NADPH + H(+). Its pathway is cell wall biogenesis; peptidoglycan biosynthesis. Its function is as follows. Cell wall formation. This Borrelia garinii subsp. bavariensis (strain ATCC BAA-2496 / DSM 23469 / PBi) (Borreliella bavariensis) protein is UDP-N-acetylenolpyruvoylglucosamine reductase.